The following is a 388-amino-acid chain: Na(+)/H(+) antiporter NhaA (388 aa).

The next 11 membrane-spanning stretches (helical) occupy residues 14-34 (GGIILIIAAVLAMLMANSGFT), 59-79 (MLLWINDALMAVFFLLIGLEV), 95-115 (AFPVIAAIGGMIVPALLYLAF), 125-145 (GWAIPAATDIAFALGVLALLG), 154-174 (IFLMALAIIDDLGAIVIIALF), 179-199 (LSMVSLGVAAFAIVLLAVLNL), 219-239 (VLKSGVHATLAGVIVGFFIPL), 254-274 (VLHPWVAYLILPLFAFANAGV), 287-307 (ILPLGIIAGLLIGKPLGISLF), 328-348 (IMAVGILCGIGFTMSIFIASL), and 356-376 (ALINWAKLGILIGSLLSAVIG).

It belongs to the NhaA Na(+)/H(+) (TC 2.A.33) antiporter family.

Its subcellular location is the cell inner membrane. It catalyses the reaction Na(+)(in) + 2 H(+)(out) = Na(+)(out) + 2 H(+)(in). In terms of biological role, na(+)/H(+) antiporter that extrudes sodium in exchange for external protons. This Citrobacter koseri (strain ATCC BAA-895 / CDC 4225-83 / SGSC4696) protein is Na(+)/H(+) antiporter NhaA.